The chain runs to 156 residues: Xanthocillin biosynthesis cluster protein D (156 aa).

Asn107 and Asn120 each carry an N-linked (GlcNAc...) asparagine glycan. The chain crosses the membrane as a helical span at residues 131-153; sequence IHLNAIALVATVWYGFTLSSSLL.

The protein localises to the membrane. It functions in the pathway secondary metabolite biosynthesis. Functionally, part of the gene cluster that mediates the biosynthesis of the isocyanide xanthocillin and its derivatives. The first step of the pathway consists in the conversion of tyrosine into a vinyl-isonitrile intermediate by the isocyanide synthase xanB. Subsequent oxidative dimerization of this intermediate to form xanthocillin may involve the cytochrome P450 monooxygenase xanG, whose expression is coregulated with that of XanB. Xanthocillin can be further modified by the isonitrile hydratase-like protein xanA which introduces N-formyl groups and the methyltransferase xanE which introduces methyl groups, leading to the production of several derivatives including fumiformamide. Finally, fumiformamide can be subject to both oxidative and reductive cyclization to yield melanocins E and F, respectively. The protein is Xanthocillin biosynthesis cluster protein D of Aspergillus fumigatus (strain ATCC MYA-4609 / CBS 101355 / FGSC A1100 / Af293) (Neosartorya fumigata).